The sequence spans 257 residues: RING1 and YY1-binding protein B (257 aa).

Disordered regions lie at residues 1–24 (MGDK…GFWD) and 45–257 (RKGT…DESF). The segment at 19 to 48 (DNGFWDCSVCTFRNSAEAFKCSICDVRKGT) adopts a RanBP2-type zinc-finger fold. Positions 74–129 (PKKEKKEKPERPEKDRAEEERPDINPPDEHPVEQRDKDKSEKEQPEKEKKDREKEI) are enriched in basic and acidic residues. Positions 149–168 (HQSPPSERNSIQSGKSTTKT) are enriched in polar residues. Residues 169-178 (KNSHNSRPKL) are compositionally biased toward basic residues. Positions 209–233 (TSSTSSSTVTSSASSEQQHQSSGSE) are enriched in low complexity.

The protein resides in the nucleus. The protein localises to the cytoplasm. Its function is as follows. May be implicated in the regulation of the transcription as a repressor of the transcriptional activity of E4TF1. The sequence is that of RING1 and YY1-binding protein B (rybpb) from Danio rerio (Zebrafish).